The primary structure comprises 325 residues: DNA-directed RNA polymerase subunit alpha (325 aa).

The interval 1 to 238 (MSPKNLLKGF…DHLTVFINFE (238 aa)) is alpha N-terminal domain (alpha-NTD). The segment at 255 to 325 (LKAALSKHVE…MGLSFGMRDF (71 aa)) is alpha C-terminal domain (alpha-CTD).

This sequence belongs to the RNA polymerase alpha chain family. In terms of assembly, homodimer. The RNAP catalytic core consists of 2 alpha, 1 beta, 1 beta' and 1 omega subunit. When a sigma factor is associated with the core the holoenzyme is formed, which can initiate transcription.

The catalysed reaction is RNA(n) + a ribonucleoside 5'-triphosphate = RNA(n+1) + diphosphate. Functionally, DNA-dependent RNA polymerase catalyzes the transcription of DNA into RNA using the four ribonucleoside triphosphates as substrates. This chain is DNA-directed RNA polymerase subunit alpha, found in Leptospira biflexa serovar Patoc (strain Patoc 1 / Ames).